The following is a 484-amino-acid chain: Rho guanine nucleotide exchange factor 35 (484 aa).

Positions 139 to 418 (FSSDLGSEEE…ALIAPEDSPH (280 aa)) are disordered. Ser-184 bears the Phosphoserine mark. A compositionally biased stretch (low complexity) spans 217–237 (ESQGLLHPQEVQVLEEQGQQE). The segment covering 266-278 (NDEKGEQKQKQEQ) has biased composition (basic and acidic residues). Over residues 299–309 (GLNDGEWEQED) the composition is skewed to acidic residues. Basic and acidic residues-rich tracts occupy residues 323–368 (GEER…KEKG) and 394–404 (RSREEENEHHG).

The chain is Rho guanine nucleotide exchange factor 35 (ARHGEF35) from Homo sapiens (Human).